The primary structure comprises 617 residues: Transmembrane protein 232 (617 aa).

Residues 129–149 form a helical membrane-spanning segment; that stretch reads LVKIGYLIFLRLFVFFLHGHL. A coiled-coil region spans residues 567 to 604; it reads LKQIEAVCEAQNRKDEEEKEKIRFQEIMKQRERKLNKQ. Residues 598–617 are disordered; sequence ERKLNKQTKPYEITPSEKKE.

The protein resides in the membrane. Functionally, plays a critical role for male fertility and sperm motility by regulating sperm cytoplasm removal and maintaining axoneme integrity. The protein is Transmembrane protein 232 (Tmem232) of Rattus norvegicus (Rat).